A 230-amino-acid polypeptide reads, in one-letter code: ATP synthase subunit a 1 (230 aa).

5 helical membrane passes run 20–40 (ATIVFSWLVMLILVLGSWLIT), 78–98 (FLPFIGTLFLFITMANLLTIF), 112–132 (AALALCVFVAVPIYGIKNVGI), 174–194 (LLVAILISIVPLFFPAVMTLF), and 195–215 (GLLVGVIQAYVFTILAMVYIA).

This sequence belongs to the ATPase A chain family. As to quaternary structure, F-type ATPases have 2 components, CF(1) - the catalytic core - and CF(0) - the membrane proton channel. CF(1) has five subunits: alpha(3), beta(3), gamma(1), delta(1), epsilon(1). CF(0) has four main subunits: a, b, b' and c.

It localises to the cellular thylakoid membrane. In terms of biological role, key component of the proton channel; it plays a direct role in the translocation of protons across the membrane. This is ATP synthase subunit a 1 from Crocosphaera subtropica (strain ATCC 51142 / BH68) (Cyanothece sp. (strain ATCC 51142)).